Consider the following 105-residue polypeptide: Protein S100-A11 (105 aa).

N-acetylmethionine is present on Met-1. At Ala-2 the chain carries N-acetylalanine; in Protein S100-A11, N-terminally processed. Residue Lys-3 is modified to N6-acetyllysine. Phosphoserine is present on residues Ser-5 and Ser-6. Thr-10 carries the phosphothreonine modification. EF-hand domains lie at 13–49 (CIESLIAVFQKYAGKDGYNYTLSKTEFLSFMNTELAA) and 55–90 (KDPGVLDRMMKKLDTNSDGQLDFSEFLNLIGGLAMA). At Lys-27 the chain carries N6-acetyllysine. Ca(2+)-binding residues include Thr-33, Glu-38, Asp-68, Asn-70, Asp-72, Gln-74, and Glu-79.

This sequence belongs to the S-100 family. As to quaternary structure, homodimer; disulfide-linked. In terms of processing, phosphorylation at Thr-10 by PRKCA significantly suppresses homodimerization and promotes association with NCL/nucleolin which induces nuclear translocation.

The protein resides in the cytoplasm. It localises to the nucleus. In terms of biological role, facilitates the differentiation and the cornification of keratinocytes. This Homo sapiens (Human) protein is Protein S100-A11 (S100A11).